A 450-amino-acid chain; its full sequence is Acyltransferase GLAUCE (450 aa).

Active-site proton acceptor residues include His-171 and Glu-394.

The protein belongs to the plant acyltransferase family. Restricted to the central cells of embryo sacs.

The protein localises to the cytoplasm. It is found in the nucleus. Required for double fertilization of the egg cell and the central cell by two sperm cells, resulting in the formation of the embryo and the endosperm. Involved in the regulation of embryonic expression of PHE1. Essential in maternal tissues to ensure the paternal embryonic expression of several genes, including RPS5a and FAC1, both of which being essential for early embryo and endosperm development in fertilized seeds. This is Acyltransferase GLAUCE from Arabidopsis thaliana (Mouse-ear cress).